Reading from the N-terminus, the 54-residue chain is Ribulose bisphosphate carboxylase large chain (54 aa).

A propeptide spanning residues 1–2 is cleaved from the precursor; it reads MS. An N-acetylproline modification is found at Pro-3. Position 14 is an N6,N6,N6-trimethyllysine (Lys-14).

This sequence belongs to the RuBisCO large chain family. Type I subfamily. In terms of assembly, heterohexadecamer of 8 large chains and 8 small chains.

Its subcellular location is the plastid. The protein resides in the chloroplast. The catalysed reaction is 2 (2R)-3-phosphoglycerate + 2 H(+) = D-ribulose 1,5-bisphosphate + CO2 + H2O. The enzyme catalyses D-ribulose 1,5-bisphosphate + O2 = 2-phosphoglycolate + (2R)-3-phosphoglycerate + 2 H(+). RuBisCO catalyzes two reactions: the carboxylation of D-ribulose 1,5-bisphosphate, the primary event in carbon dioxide fixation, as well as the oxidative fragmentation of the pentose substrate in the photorespiration process. Both reactions occur simultaneously and in competition at the same active site. This Magnolia liliiflora (Mulan magnolia) protein is Ribulose bisphosphate carboxylase large chain (rbcL).